The primary structure comprises 199 residues: Recombination protein RecR (199 aa).

The C4-type zinc-finger motif lies at 57–72; it reads CQKCRTFTEQSLCPIC. The region spanning 81 to 176 is the Toprim domain; it reads DTLCVVETPA…AVSRIAHGVP (96 aa).

This sequence belongs to the RecR family.

Its function is as follows. May play a role in DNA repair. It seems to be involved in an RecBC-independent recombinational process of DNA repair. It may act with RecF and RecO. This is Recombination protein RecR from Shewanella amazonensis (strain ATCC BAA-1098 / SB2B).